The sequence spans 426 residues: MCDVVLGAQWGDEGKGKLVDLLCDDIEVCARCAGGNNAGHTIVVGKTKYDFHMLPSGLVNPKCQNILGSGVVVHIPSFFEELENLEKKGLDCRNRLFVSSRAHLVFDFHQRTDKLKEAELSENKKSIGTTGKGIGPTYSTKASRSGIRVHHLVSDDPDAWDEFKTRYYRLVDSRYKRYGEFEYDAEAELERYKKYREVLKPFVVDSVNFMHKAIKDKKRILVEGANALMLDIDFGTYPYVTSSSTGIGGVLTGLGLPPTAIRNVYGVVKAYTTRVGEGPFPTEQLNEVGEKLQDIGAEFGVTTGRKRRCGWLDLVVMKYSTAINGYTSLNITKLDVLDTFKEIKVGVSYTYKGKKLESFPEDLNVLKNVEVDYVTLPGWEQDITGIKKYSDLPENAQKYLKFIEDFLEVPIEWVGTGPARESMLTK.

GTP-binding positions include 11-17 (GDEGKGK) and 39-41 (GHT). D12 acts as the Proton acceptor in catalysis. D12 and G39 together coordinate Mg(2+). IMP is bound by residues 12–15 (DEGK), 37–40 (NAGH), T130, R144, N226, T241, and R305. H40 (proton donor) is an active-site residue. 301–307 (VTTGRKR) lines the substrate pocket. GTP-binding positions include R307, 333–335 (KLD), and 415–417 (GTG).

It belongs to the adenylosuccinate synthetase family. In terms of assembly, homodimer. Requires Mg(2+) as cofactor.

It localises to the cytoplasm. It carries out the reaction IMP + L-aspartate + GTP = N(6)-(1,2-dicarboxyethyl)-AMP + GDP + phosphate + 2 H(+). Its pathway is purine metabolism; AMP biosynthesis via de novo pathway; AMP from IMP: step 1/2. Its function is as follows. Plays an important role in the de novo pathway and in the salvage pathway of purine nucleotide biosynthesis. Catalyzes the first committed step in the biosynthesis of AMP from IMP. The chain is Adenylosuccinate synthetase from Meyerozyma guilliermondii (strain ATCC 6260 / CBS 566 / DSM 6381 / JCM 1539 / NBRC 10279 / NRRL Y-324) (Yeast).